Here is a 163-residue protein sequence, read N- to C-terminus: S-ribosylhomocysteine lyase (163 aa).

His-54, His-58, and Cys-128 together coordinate Fe cation.

This sequence belongs to the LuxS family. As to quaternary structure, homodimer. Requires Fe cation as cofactor.

It catalyses the reaction S-(5-deoxy-D-ribos-5-yl)-L-homocysteine = (S)-4,5-dihydroxypentane-2,3-dione + L-homocysteine. Involved in the synthesis of autoinducer 2 (AI-2) which is secreted by bacteria and is used to communicate both the cell density and the metabolic potential of the environment. The regulation of gene expression in response to changes in cell density is called quorum sensing. Catalyzes the transformation of S-ribosylhomocysteine (RHC) to homocysteine (HC) and 4,5-dihydroxy-2,3-pentadione (DPD). The polypeptide is S-ribosylhomocysteine lyase (Wolinella succinogenes (strain ATCC 29543 / DSM 1740 / CCUG 13145 / JCM 31913 / LMG 7466 / NCTC 11488 / FDC 602W) (Vibrio succinogenes)).